Reading from the N-terminus, the 391-residue chain is MGVVYGSQQNLSEYFYSSVNMAEVPDTFEENRGHSFEGVTLQRRHVKGMKSYGSDITPRRPKQLGLPKEVNTSECIDQGSWRKPSAFESLRSYSRKFSKRIFSFIGVESKSTVQRNASGADSTSLSHFTANEINKGNCKKTALSNEFNSANKGSKASGVGAELPSVNGFIEGELHDDNETDSFRINELAKQIQETSLGATTQEDESSDGICWDELSTTSPESSKVSEPIIQDNTQTTHINNDSSDIRFSSRCDLFADDADSDWEQDFNVKFDSPLIIPETVNSAGHTVREQLFEVKEFTRSIKDLKDLYEKANSKDIYDKDSEILGEAKAILRLADPANYSDLKDEDAQNILSKYKVKLEGDSSLDFDASMLPGLNDHVHYLMSQLQLLLH.

Residues 49–68 (MKSYGSDITPRRPKQLGLPK) are disordered.

Its function is as follows. Involved in septation. The polypeptide is Septation protein etd1 (etd1) (Schizosaccharomyces pombe (strain 972 / ATCC 24843) (Fission yeast)).